The sequence spans 426 residues: MLDPKLLRNQLNDVAENLKKRGYELDTQAFTALEERRRTLQTACESLQQERNTRSKNIGKAKAAGEDIGPLLQEVDNLKSALAEAEQNLQALQGELEALVSAIPNMVHDDVPAGKSEDDNVEISKWGEPKTFDFEVQDHVDVGAAIGGLDFETATKITGARFSLMRGDIASMHRALTQLMLNTHIDEHKYEEVYVPYIVNKDSLYGTGQLPKFEEDLFKLTDDREFYLIPTAEVPVTNIARGEIFDESQLPVRFVAHTPCFRSEAGSYGRDTRGMIRQHQFEKVELVQLVKPEDSLNALEELTQHAEAILQKLGLPYRKVVLCGGDIGFSATKTYDLEVWIPSQGKYREISSCSCFGDFQARRMMARYRNSETNKPELLHTINGSGLAVGRTLVAVLENYQREDGSVEIPAALQPYMNGKTVIAKA.

231 to 233 provides a ligand contact to L-serine; it reads TAE. 262–264 contributes to the ATP binding site; that stretch reads RSE. Residue Glu285 participates in L-serine binding. 349–352 is an ATP binding site; sequence EISS. Ser385 contributes to the L-serine binding site.

Belongs to the class-II aminoacyl-tRNA synthetase family. Type-1 seryl-tRNA synthetase subfamily. In terms of assembly, homodimer. The tRNA molecule binds across the dimer.

The protein resides in the cytoplasm. It carries out the reaction tRNA(Ser) + L-serine + ATP = L-seryl-tRNA(Ser) + AMP + diphosphate + H(+). It catalyses the reaction tRNA(Sec) + L-serine + ATP = L-seryl-tRNA(Sec) + AMP + diphosphate + H(+). The protein operates within aminoacyl-tRNA biosynthesis; selenocysteinyl-tRNA(Sec) biosynthesis; L-seryl-tRNA(Sec) from L-serine and tRNA(Sec): step 1/1. Functionally, catalyzes the attachment of serine to tRNA(Ser). Is also able to aminoacylate tRNA(Sec) with serine, to form the misacylated tRNA L-seryl-tRNA(Sec), which will be further converted into selenocysteinyl-tRNA(Sec). The protein is Serine--tRNA ligase of Saccharophagus degradans (strain 2-40 / ATCC 43961 / DSM 17024).